The primary structure comprises 440 residues: UPF0761 membrane protein Rru_A2625 (440 aa).

7 helical membrane passes run 29–49 (ILATAGSFTILVLRALITHDI), 61–81 (LLALVPLIAIALAILAAFPGF), 117–137 (GLTALGVAGLTLTAIILLLTI), 157–177 (LLVYWSVLTGGPLLMGLSFSL), 201–221 (PTLGPPLLSLTAMTLLYMLVP), 224–244 (PVPLFHALAGALVATLASALL), and 264–284 (ALAALPAFLVWMYLSWAVVLM).

The protein belongs to the UPF0761 family.

The protein resides in the cell inner membrane. This chain is UPF0761 membrane protein Rru_A2625, found in Rhodospirillum rubrum (strain ATCC 11170 / ATH 1.1.1 / DSM 467 / LMG 4362 / NCIMB 8255 / S1).